The following is a 346-amino-acid chain: Biotin synthase (346 aa).

The 219-residue stretch at 38–256 folds into the Radical SAM core domain; it reads RQVQVSTLLS…IAVARIMMPT (219 aa). [4Fe-4S] cluster is bound by residues C53, C57, and C60. [2Fe-2S] cluster is bound by residues C97, C128, C188, and R260.

The protein belongs to the radical SAM superfamily. Biotin synthase family. As to quaternary structure, homodimer. The cofactor is [4Fe-4S] cluster. Requires [2Fe-2S] cluster as cofactor.

The enzyme catalyses (4R,5S)-dethiobiotin + (sulfur carrier)-SH + 2 reduced [2Fe-2S]-[ferredoxin] + 2 S-adenosyl-L-methionine = (sulfur carrier)-H + biotin + 2 5'-deoxyadenosine + 2 L-methionine + 2 oxidized [2Fe-2S]-[ferredoxin]. The protein operates within cofactor biosynthesis; biotin biosynthesis; biotin from 7,8-diaminononanoate: step 2/2. Functionally, catalyzes the conversion of dethiobiotin (DTB) to biotin by the insertion of a sulfur atom into dethiobiotin via a radical-based mechanism. In Shigella boydii serotype 18 (strain CDC 3083-94 / BS512), this protein is Biotin synthase.